Reading from the N-terminus, the 417-residue chain is Maltodextrin-binding protein MdxE (417 aa).

A signal peptide spans 1 to 22; the sequence is MVLLKKGFAILAASFLAIGLAA. Residue cysteine 23 is the site of N-palmitoyl cysteine attachment. The S-diacylglycerol cysteine moiety is linked to residue cysteine 23.

It belongs to the bacterial solute-binding protein 1 family. As to quaternary structure, the complex is composed of two ATP-binding proteins (MsmX), two transmembrane proteins (MdxF and MdxG) and a solute-binding protein (MdxE).

It localises to the cell membrane. With respect to regulation, inhibited by glucose and lactose. Its function is as follows. Part of the ABC transporter complex involved in maltodextrin import. Binds maltodextrin. Can also bind maltose with low affinity, but is not involved in its uptake. In Bacillus subtilis (strain 168), this protein is Maltodextrin-binding protein MdxE (mdxE).